We begin with the raw amino-acid sequence, 180 residues long: Ribulose bisphosphate carboxylase small subunit, chloroplastic 2 (180 aa).

Residues 1-56 (MASSVISSAAVATRSNVTQASMVAPFTGLKSSATFPVTKKQNLDITSIASNGGRVS) constitute a chloroplast transit peptide.

This sequence belongs to the RuBisCO small chain family. Heterohexadecamer of 8 large and 8 small subunits. As to quaternary structure, (Microbial infection) Binds to tobamovirus movement protein; this interaction seems required for viral systemic movement.

It localises to the plastid. It is found in the chloroplast. The protein resides in the cell junction. The protein localises to the plasmodesma. Functionally, ruBisCO catalyzes two reactions: the carboxylation of D-ribulose 1,5-bisphosphate, the primary event in carbon dioxide fixation, as well as the oxidative fragmentation of the pentose substrate. Both reactions occur simultaneously and in competition at the same active site. Although the small subunit is not catalytic it is essential for maximal activity. Involved in antiviral defenses. This Solanum lycopersicum (Tomato) protein is Ribulose bisphosphate carboxylase small subunit, chloroplastic 2.